Consider the following 407-residue polypeptide: Protein phosphatase methylesterase 1 (407 aa).

The disordered stretch occupies residues 1 to 53 (MSDLQKSFAKSKLAKLPPEPPPIPESVADEDDDSGSSTETVTPSPVKQLFARP). Residues serine 185, aspartate 211, and histidine 342 contribute to the active site. Gly residues predominate over residues 388–401 (GAGVPLGKAEGGTT). The disordered stretch occupies residues 388-407 (GAGVPLGKAEGGTTGSFKRS).

This sequence belongs to the AB hydrolase superfamily.

It carries out the reaction [phosphatase 2A protein]-C-terminal L-leucine methyl ester + H2O = [phosphatase 2A protein]-C-terminal L-leucine + methanol + H(+). Demethylates proteins that have been reversibly carboxymethylated. Demethylates the phosphatase PP2A catalytic subunit. The protein is Protein phosphatase methylesterase 1 (ppe1) of Emericella nidulans (strain FGSC A4 / ATCC 38163 / CBS 112.46 / NRRL 194 / M139) (Aspergillus nidulans).